A 666-amino-acid chain; its full sequence is Probable potassium transport system protein Kup (666 aa).

Transmembrane regions (helical) follow at residues G16–M36, I58–L78, I98–A118, I141–G161, F165–L185, I221–L241, W253–A273, L299–I319, L343–F363, Y373–I393, P399–A419, and F424–I444.

Belongs to the HAK/KUP transporter (TC 2.A.72) family.

The protein resides in the cell membrane. It catalyses the reaction K(+)(in) + H(+)(in) = K(+)(out) + H(+)(out). In terms of biological role, transport of potassium into the cell. Likely operates as a K(+):H(+) symporter. In Streptococcus pyogenes serotype M28 (strain MGAS6180), this protein is Probable potassium transport system protein Kup.